Reading from the N-terminus, the 447-residue chain is uncharacterized protein (447 aa).

It is found in the mitochondrion. This is an uncharacterized protein from Dictyostelium discoideum (Social amoeba).